The sequence spans 413 residues: Multifunctional CCA protein (413 aa).

The ATP site is built by Gly-8 and Arg-11. Residues Gly-8 and Arg-11 each contribute to the CTP site. Residues Asp-21 and Asp-23 each contribute to the Mg(2+) site. ATP contacts are provided by Arg-91, Arg-137, and Arg-140. CTP is bound by residues Arg-91, Arg-137, and Arg-140. The HD domain maps to 228–329 (TGVHTLMTLS…VKLFDAIDAW (102 aa)).

It belongs to the tRNA nucleotidyltransferase/poly(A) polymerase family. Bacterial CCA-adding enzyme type 1 subfamily. Monomer. Can also form homodimers and oligomers. The cofactor is Mg(2+). Ni(2+) is required as a cofactor.

The enzyme catalyses a tRNA precursor + 2 CTP + ATP = a tRNA with a 3' CCA end + 3 diphosphate. It carries out the reaction a tRNA with a 3' CCA end + 2 CTP + ATP = a tRNA with a 3' CCACCA end + 3 diphosphate. Its function is as follows. Catalyzes the addition and repair of the essential 3'-terminal CCA sequence in tRNAs without using a nucleic acid template. Adds these three nucleotides in the order of C, C, and A to the tRNA nucleotide-73, using CTP and ATP as substrates and producing inorganic pyrophosphate. tRNA 3'-terminal CCA addition is required both for tRNA processing and repair. Also involved in tRNA surveillance by mediating tandem CCA addition to generate a CCACCA at the 3' terminus of unstable tRNAs. While stable tRNAs receive only 3'-terminal CCA, unstable tRNAs are marked with CCACCA and rapidly degraded. This chain is Multifunctional CCA protein, found in Salmonella typhi.